We begin with the raw amino-acid sequence, 101 residues long: MISIPFRSTMSRTLVFIILPTVLSCNPSSRLMNFSNSFNLCSYSTCNCDPSFCFEMINLARTSIACDNLTISFSVLFDDSHIPCYNNPRYSFNKLTMTILY.

An N-terminal signal peptide occupies residues 1-25; that stretch reads MISIPFRSTMSRTLVFIILPTVLSC.

This is an uncharacterized protein from Saccharomyces cerevisiae (strain ATCC 204508 / S288c) (Baker's yeast).